We begin with the raw amino-acid sequence, 720 residues long: Polyribonucleotide nucleotidyltransferase (720 aa).

The Mg(2+) site is built by Asp-484 and Asp-490. The KH domain maps to 551–610 (PRMYKISIDPSKIGSVIGSGGKTIRSIIEQTNTTVDIENDGTVVIGATDEASAQKAIKII). The S1 motif domain maps to 620-688 (GSVYTGKVTR…SQGRINLSRR (69 aa)). The disordered stretch occupies residues 697-720 (PISRNRDSQPRRSGPFRPQDRSNS).

This sequence belongs to the polyribonucleotide nucleotidyltransferase family. It depends on Mg(2+) as a cofactor.

It localises to the cytoplasm. The catalysed reaction is RNA(n+1) + phosphate = RNA(n) + a ribonucleoside 5'-diphosphate. Involved in mRNA degradation. Catalyzes the phosphorolysis of single-stranded polyribonucleotides processively in the 3'- to 5'-direction. In Dehalococcoides mccartyi (strain ATCC BAA-2266 / KCTC 15142 / 195) (Dehalococcoides ethenogenes (strain 195)), this protein is Polyribonucleotide nucleotidyltransferase.